A 553-amino-acid chain; its full sequence is MRVSRRFTILAITAMIFLSLIICIYAVAAHTTVNVILQKQERSYGVICDAGSTGTRLFVYNWVSTSDSELIQIEPVIYDNKPVMKKISPGLSTFGTKPDEAAEYLRPLMELAELHIPEEKRPYTPVFIFATAGMRLIPDEQKEAVLTNLRTELPKITSMQVLKEHIRIIEGKWEGIYSWIAVNYALGKFNRTFTPDFPGTSPGQQRSKTVGMIDMGGASAQIAFELPDNDDFNSINVENINLGCREDDSLFRYKLFVTTFLGYGVNEGIRKYEKTLMAKLKDQNGTVIQDDCMPLNLHKTVTMENGDNFVRRGTGNWDTCAAEVKKLLNPETSSEVCKAEVAKCYFGAVPAPNIPLSNVEMYGFSEYWYSTHDVLGLGGQYNAENIAKKSEQYCGQRWSTIQAASKKNLYPRADEERLKTQCFKSAWITSVLHDGFSVDKTHNKFQSVSTIAGQEVQWALGAMIYHMRFFPLRDSTRNLIVKETHSASESLWAPLFFLSAVFCLFVLVCAKEHSLLCFDDKRRASFGLTRRQYSYKMLKEDRTSSSAFLENFA.

Over 1–8 the chain is Cytoplasmic; sequence MRVSRRFT. Residues 9-29 form a helical membrane-spanning segment; it reads ILAITAMIFLSLIICIYAVAA. At 30 to 489 the chain is on the lumenal side; the sequence is HTTVNVILQK…IVKETHSASE (460 aa). Glu174 (proton acceptor) is an active-site residue. N-linked (GlcNAc...) asparagine glycans are attached at residues Asn190 and Asn284. A helical membrane pass occupies residues 490 to 510; the sequence is SLWAPLFFLSAVFCLFVLVCA. Topologically, residues 511–553 are cytoplasmic; that stretch reads KEHSLLCFDDKRRASFGLTRRQYSYKMLKEDRTSSSAFLENFA.

This sequence belongs to the GDA1/CD39 NTPase family.

It is found in the golgi apparatus membrane. The enzyme catalyses a ribonucleoside 5'-diphosphate + H2O = a ribonucleoside 5'-phosphate + phosphate + H(+). Its function is as follows. Seems to be able to hydrolyze ADP, UDP and GDP. Supports mig-17 glycosylation and surface expression, which is required for proper migration of distal tip cells during gonad morphogenesis. In Caenorhabditis briggsae, this protein is Nucleoside-diphosphatase mig-23.